Consider the following 429-residue polypeptide: Gamma-glutamyl phosphate reductase (429 aa).

Belongs to the gamma-glutamyl phosphate reductase family.

It localises to the cytoplasm. It catalyses the reaction L-glutamate 5-semialdehyde + phosphate + NADP(+) = L-glutamyl 5-phosphate + NADPH + H(+). Its pathway is amino-acid biosynthesis; L-proline biosynthesis; L-glutamate 5-semialdehyde from L-glutamate: step 2/2. In terms of biological role, catalyzes the NADPH-dependent reduction of L-glutamate 5-phosphate into L-glutamate 5-semialdehyde and phosphate. The product spontaneously undergoes cyclization to form 1-pyrroline-5-carboxylate. The protein is Gamma-glutamyl phosphate reductase of Sphingopyxis alaskensis (strain DSM 13593 / LMG 18877 / RB2256) (Sphingomonas alaskensis).